Consider the following 163-residue polypeptide: Phosphopantetheine adenylyltransferase (163 aa).

Residue Thr-9 participates in substrate binding. Residues 9–10 and His-17 each bind ATP; that span reads TF. Residues Lys-41, Leu-76, and Arg-90 each coordinate substrate. ATP-binding positions include 91–93, Glu-101, and 126–132; these read GLR and YSFISST.

It belongs to the bacterial CoaD family. In terms of assembly, homohexamer. Mg(2+) serves as cofactor.

The protein localises to the cytoplasm. The enzyme catalyses (R)-4'-phosphopantetheine + ATP + H(+) = 3'-dephospho-CoA + diphosphate. It functions in the pathway cofactor biosynthesis; coenzyme A biosynthesis; CoA from (R)-pantothenate: step 4/5. Its function is as follows. Reversibly transfers an adenylyl group from ATP to 4'-phosphopantetheine, yielding dephospho-CoA (dPCoA) and pyrophosphate. This is Phosphopantetheine adenylyltransferase from Dichelobacter nodosus (strain VCS1703A).